The primary structure comprises 692 residues: Glycine--tRNA ligase beta subunit (692 aa).

This sequence belongs to the class-II aminoacyl-tRNA synthetase family. As to quaternary structure, tetramer of two alpha and two beta subunits.

Its subcellular location is the cytoplasm. The enzyme catalyses tRNA(Gly) + glycine + ATP = glycyl-tRNA(Gly) + AMP + diphosphate. This Oceanobacillus iheyensis (strain DSM 14371 / CIP 107618 / JCM 11309 / KCTC 3954 / HTE831) protein is Glycine--tRNA ligase beta subunit.